The following is a 313-amino-acid chain: Olfactory receptor 10Z1 (313 aa).

The Extracellular segment spans residues 1–25 (MGQTNVTSWRDFVFLGFSSSGELQL). Asparagine 5 carries N-linked (GlcNAc...) asparagine glycosylation. Residues 26–46 (LLFALFLSLYLVTLTSNVFII) form a helical membrane-spanning segment. Residues 47–54 (IAIRLDSH) lie on the Cytoplasmic side of the membrane. A helical membrane pass occupies residues 55–75 (LHTPMYLFLSFLSFSETCYTL). At 76–99 (GIIPRMLSGLAGGDQAISYVGCAA) the chain is on the extracellular side. An intrachain disulfide couples cysteine 97 to cysteine 189. The helical transmembrane segment at 100-120 (QMFFSASWACTNCFLLAAMGF) threads the bilayer. Residues 121–139 (DRYVAICAPLHYASHMNPT) are Cytoplasmic-facing. Residues 140-160 (LCAQLVITSFLTGYLFGLGMT) traverse the membrane as a helical segment. Residues 161–197 (LVIFHLSFCSSHEIQHFFCDTPPVLSLACGDTGPSEL) are Extracellular-facing. The chain crosses the membrane as a helical span at residues 198–217 (RIFILSLLVLLVSFFFITIS). Residues 218 to 237 (YAYILAAILRIPSAEGQKKA) lie on the Cytoplasmic side of the membrane. The helical transmembrane segment at 238–258 (FSTCASHLTVVIIHYGCASFV) threads the bilayer. The Extracellular segment spans residues 259 to 271 (YLRPKASYSLERD). A helical transmembrane segment spans residues 272-292 (QLIAMTYTVVTPLLNPIVYSL). Residues 293–313 (RNRAIQTALRNAFRGRLLGKG) lie on the Cytoplasmic side of the membrane.

This sequence belongs to the G-protein coupled receptor 1 family.

Its subcellular location is the cell membrane. In terms of biological role, odorant receptor. This chain is Olfactory receptor 10Z1 (OR10Z1), found in Homo sapiens (Human).